The sequence spans 232 residues: 7-cyano-7-deazaguanine synthase (232 aa).

8–18 provides a ligand contact to ATP; that stretch reads LSGGLDSATVL. Zn(2+)-binding residues include Cys188, Cys198, Cys201, and Cys204.

Belongs to the QueC family. Zn(2+) is required as a cofactor.

The enzyme catalyses 7-carboxy-7-deazaguanine + NH4(+) + ATP = 7-cyano-7-deazaguanine + ADP + phosphate + H2O + H(+). It functions in the pathway purine metabolism; 7-cyano-7-deazaguanine biosynthesis. Catalyzes the ATP-dependent conversion of 7-carboxy-7-deazaguanine (CDG) to 7-cyano-7-deazaguanine (preQ(0)). The polypeptide is 7-cyano-7-deazaguanine synthase (Nitrosospira multiformis (strain ATCC 25196 / NCIMB 11849 / C 71)).